The chain runs to 347 residues: Eukaryotic translation initiation factor 3 subunit I (347 aa).

5 WD repeats span residues 8–47 (GHER…RLGT), 50–89 (GHTG…CVAT), 149–190 (THEG…EYVD), 194–233 (LHEK…VLKK), and 291–330 (GHFG…FDFK). Residue S302 is modified to Phosphoserine.

This sequence belongs to the eIF-3 subunit I family. As to quaternary structure, component of the eukaryotic translation initiation factor 3 (eIF-3) complex.

The protein localises to the cytoplasm. Functionally, component of the eukaryotic translation initiation factor 3 (eIF-3) complex, which is involved in protein synthesis of a specialized repertoire of mRNAs and, together with other initiation factors, stimulates binding of mRNA and methionyl-tRNAi to the 40S ribosome. The eIF-3 complex specifically targets and initiates translation of a subset of mRNAs involved in cell proliferation. The sequence is that of Eukaryotic translation initiation factor 3 subunit I from Saccharomyces cerevisiae (strain YJM789) (Baker's yeast).